The primary structure comprises 125 residues: Lectin (125 aa).

The C-type lectin domain maps to 1 to 120 (MDYEILFSDE…CGGARRVICE (120 aa)). Disulfide bonds link C21/C119 and C96/C111.

In terms of assembly, homodimer.

Its function is as follows. Role in the defense system of the organism against microorganisms. This calcium-binding lectin binds galactose. This is Lectin from Polyandrocarpa misakiensis (Tunicate).